A 223-amino-acid chain; its full sequence is uncharacterized protein (223 aa).

The N-terminal 12 residues, 1–12, are a transit peptide targeting the mitochondrion; it reads MFRSLVRKTTPL.

It localises to the mitochondrion. This is an uncharacterized protein from Candida albicans (strain WO-1) (Yeast).